Reading from the N-terminus, the 464-residue chain is Fumarate hydratase class II (464 aa).

Substrate contacts are provided by residues 100–102 (SGT), 131–134 (HPND), 141–143 (SSN), and T189. H190 functions as the Proton donor/acceptor in the catalytic mechanism. S320 is a catalytic residue. Substrate-binding positions include S321 and 326-328 (KVN).

This sequence belongs to the class-II fumarase/aspartase family. Fumarase subfamily. In terms of assembly, homotetramer.

It localises to the cytoplasm. The enzyme catalyses (S)-malate = fumarate + H2O. Its pathway is carbohydrate metabolism; tricarboxylic acid cycle; (S)-malate from fumarate: step 1/1. In terms of biological role, involved in the TCA cycle. Catalyzes the stereospecific interconversion of fumarate to L-malate. This is Fumarate hydratase class II from Deinococcus radiodurans (strain ATCC 13939 / DSM 20539 / JCM 16871 / CCUG 27074 / LMG 4051 / NBRC 15346 / NCIMB 9279 / VKM B-1422 / R1).